The primary structure comprises 352 residues: Fatty acid desaturase (352 aa).

The next 2 membrane-spanning stretches (helical) occupy residues 28–48 and 55–75; these read SLIQLLNTFIPFFGLWFLAYL and LLTLALTVIAAGFLTRIFIIF. The Histidine box-1 signature appears at 76-80; sequence HDCCH. Residues 89–109 form a helical membrane-spanning segment; the sequence is YNHILGFLTGVLTLFPYLQWQ. The short motif at 112 to 116 is the Histidine box-2 element; sequence HSIHH. 3 helical membrane passes run 151-171, 186-206, and 209-229; these read LYRNPFIMFILGPIYVFLITN, TYLTNLAIVALAAACCLIFGW, and FLLVQGPIFLISGSIGVWLFY. The Histidine box-3 motif lies at 274-278; that stretch reads HHVHH.

It belongs to the fatty acid desaturase type 1 family.

Its subcellular location is the cell membrane. It participates in lipid metabolism; fatty acid metabolism. Its function is as follows. Catalyzes the introduction of a cis-double bond at the delta(5) position of existing saturated fatty acids attached to membrane phospholipids. It is not strictly specific for palmitic acid (C16) but can also accept C14 as well as C18 species to yield unsaturated fatty acids. The polypeptide is Fatty acid desaturase (des) (Bacillus subtilis (strain 168)).